Consider the following 119-residue polypeptide: Large ribosomal subunit protein bL20 (119 aa).

Belongs to the bacterial ribosomal protein bL20 family.

Its function is as follows. Binds directly to 23S ribosomal RNA and is necessary for the in vitro assembly process of the 50S ribosomal subunit. It is not involved in the protein synthesizing functions of that subunit. The protein is Large ribosomal subunit protein bL20 of Bacillus velezensis (strain DSM 23117 / BGSC 10A6 / LMG 26770 / FZB42) (Bacillus amyloliquefaciens subsp. plantarum).